Here is a 45-residue protein sequence, read N- to C-terminus: Putative purine permease 9 (45 aa).

Not detected in seedlings, leaves, embryos or root and shoot meristems.

The polypeptide is Putative purine permease 9 (Arabidopsis thaliana (Mouse-ear cress)).